Here is a 44-residue protein sequence, read N- to C-terminus: Photosystem I reaction center subunit IX (44 aa).

A helical membrane pass occupies residues 7-27 (YLSVAPVVSTIWFGALAGLLI).

The protein belongs to the PsaJ family.

The protein localises to the plastid. It localises to the chloroplast thylakoid membrane. Functionally, may help in the organization of the PsaE and PsaF subunits. The polypeptide is Photosystem I reaction center subunit IX (Cucumis sativus (Cucumber)).